The sequence spans 278 residues: 4-hydroxy-tetrahydrodipicolinate reductase (278 aa).

NAD(+)-binding positions include 13-18 (GAAGKM) and 111-113 (GTT). H167 acts as the Proton donor/acceptor in catalysis. H168 lines the (S)-2,3,4,5-tetrahydrodipicolinate pocket. Residue K171 is the Proton donor of the active site. Residue 177-178 (GT) participates in (S)-2,3,4,5-tetrahydrodipicolinate binding.

Belongs to the DapB family.

It is found in the cytoplasm. It carries out the reaction (S)-2,3,4,5-tetrahydrodipicolinate + NAD(+) + H2O = (2S,4S)-4-hydroxy-2,3,4,5-tetrahydrodipicolinate + NADH + H(+). The catalysed reaction is (S)-2,3,4,5-tetrahydrodipicolinate + NADP(+) + H2O = (2S,4S)-4-hydroxy-2,3,4,5-tetrahydrodipicolinate + NADPH + H(+). The protein operates within amino-acid biosynthesis; L-lysine biosynthesis via DAP pathway; (S)-tetrahydrodipicolinate from L-aspartate: step 4/4. Its function is as follows. Catalyzes the conversion of 4-hydroxy-tetrahydrodipicolinate (HTPA) to tetrahydrodipicolinate. The polypeptide is 4-hydroxy-tetrahydrodipicolinate reductase (Trichormus variabilis (strain ATCC 29413 / PCC 7937) (Anabaena variabilis)).